The chain runs to 723 residues: Protein Hook homolog (723 aa).

In terms of domain architecture, Calponin-homology (CH) spans 4 to 120; that stretch reads TELCECLVQW…RLLQLILGCA (117 aa). Coiled coils occupy residues 162 to 423 and 457 to 665; these read VLPE…MQLQ and EIKE…IVSA. A disordered region spans residues 682–723; the sequence is LANGGPMQGGQSFLARQRQATSRRTTVSTTHPGHARSVNFVN. Positions 696-711 are enriched in low complexity; it reads ARQRQATSRRTTVSTT.

This sequence belongs to the hook family. As to quaternary structure, interacts with microtubules.

The protein localises to the cytoplasm. It localises to the cytoskeleton. May function to promote vesicle trafficking and/or fusion. May act to link a number of membrane-bound organelles to the cytoskeleton. The chain is Protein Hook homolog from Branchiostoma floridae (Florida lancelet).